The following is a 297-amino-acid chain: Glutamyl-Q tRNA(Asp) synthetase (297 aa).

Residues 7–11 (RFAPS) and glutamate 43 each bind L-glutamate. The 'HIGH' region motif lies at 10–20 (PSPTGPLHFGS). Zn(2+) contacts are provided by cysteine 99, cysteine 101, tyrosine 122, and cysteine 126. Tyrosine 182 and arginine 200 together coordinate L-glutamate. Residues 238 to 242 (KLSKQ) carry the 'KMSKS' region motif. Position 241 (lysine 241) interacts with ATP.

This sequence belongs to the class-I aminoacyl-tRNA synthetase family. GluQ subfamily. It depends on Zn(2+) as a cofactor.

Functionally, catalyzes the tRNA-independent activation of glutamate in presence of ATP and the subsequent transfer of glutamate onto a tRNA(Asp). Glutamate is transferred on the 2-amino-5-(4,5-dihydroxy-2-cyclopenten-1-yl) moiety of the queuosine in the wobble position of the QUC anticodon. This chain is Glutamyl-Q tRNA(Asp) synthetase, found in Burkholderia pseudomallei (strain K96243).